Consider the following 442-residue polypeptide: Glutamyl-tRNA reductase (442 aa).

Substrate is bound by residues 49–52 (TCNR), S109, 114–116 (ESQ), and Q120. The active-site Nucleophile is C50. 189–194 (GAGAMS) lines the NADP(+) pocket.

This sequence belongs to the glutamyl-tRNA reductase family. As to quaternary structure, homodimer.

The enzyme catalyses (S)-4-amino-5-oxopentanoate + tRNA(Glu) + NADP(+) = L-glutamyl-tRNA(Glu) + NADPH + H(+). Its pathway is porphyrin-containing compound metabolism; protoporphyrin-IX biosynthesis; 5-aminolevulinate from L-glutamyl-tRNA(Glu): step 1/2. In terms of biological role, catalyzes the NADPH-dependent reduction of glutamyl-tRNA(Glu) to glutamate 1-semialdehyde (GSA). This Kineococcus radiotolerans (strain ATCC BAA-149 / DSM 14245 / SRS30216) protein is Glutamyl-tRNA reductase.